Reading from the N-terminus, the 351-residue chain is Photosystem II D2 protein (351 aa).

The helical transmembrane segment at 39–59 (TAYLALGGWFTGTTFVTSWYT) threads the bilayer. Residue His116 coordinates chlorophyll a. The helical transmembrane segment at 123–139 (GFMLRQFEIARLVGIRP) threads the bilayer. Pheophytin a-binding residues include Gln128 and Asn141. Residues 151 to 164 (VFLACFLIYPLGQH) traverse the membrane as a helical segment. His196 provides a ligand contact to chlorophyll a. The chain crosses the membrane as a helical span at residues 206–226 (GALLCGIHGATVQNTLFEDGA). A plastoquinone contacts are provided by His213 and Phe260. His213 is a binding site for Fe cation. His267 is a Fe cation binding site. A helical transmembrane segment spans residues 277–293 (GMWTPSVGIVGLAVNLR).

It belongs to the reaction center PufL/M/PsbA/D family. PSII is composed of 1 copy each of membrane proteins PsbA, PsbB, PsbC, PsbD, PsbE, PsbF, PsbH, PsbI, PsbJ, PsbK, PsbL, PsbM, PsbT, PsbX, PsbY, Psb30/Ycf12, peripheral proteins PsbO, CyanoQ (PsbQ), PsbU, PsbV and a large number of cofactors. It forms dimeric complexes. It depends on The D1/D2 heterodimer binds P680, chlorophylls that are the primary electron donor of PSII, and subsequent electron acceptors. It shares a non-heme iron and each subunit binds pheophytin, quinone, additional chlorophylls, carotenoids and lipids. There is also a Cl(-1) ion associated with D1 and D2, which is required for oxygen evolution. The PSII complex binds additional chlorophylls, carotenoids and specific lipids. as a cofactor.

The protein resides in the cellular thylakoid membrane. The catalysed reaction is 2 a plastoquinone + 4 hnu + 2 H2O = 2 a plastoquinol + O2. Photosystem II (PSII) is a light-driven water:plastoquinone oxidoreductase that uses light energy to abstract electrons from H(2)O, generating O(2) and a proton gradient subsequently used for ATP formation. It consists of a core antenna complex that captures photons, and an electron transfer chain that converts photonic excitation into a charge separation. The D1/D2 (PsbA/PsbD) reaction center heterodimer binds P680, the primary electron donor of PSII as well as several subsequent electron acceptors. D2 is needed for assembly of a stable PSII complex. This is Photosystem II D2 protein from Prochlorococcus marinus (strain MIT 9313).